We begin with the raw amino-acid sequence, 192 residues long: Bifunctional protein PyrR (192 aa).

The short motif at 107–119 (VVLVDDVLFSGRT) is the PRPP-binding element.

Belongs to the purine/pyrimidine phosphoribosyltransferase family. PyrR subfamily.

It catalyses the reaction UMP + diphosphate = 5-phospho-alpha-D-ribose 1-diphosphate + uracil. In terms of biological role, regulates the transcription of the pyrimidine nucleotide (pyr) operon in response to exogenous pyrimidines. Its function is as follows. Also displays a weak uracil phosphoribosyltransferase activity which is not physiologically significant. This is Bifunctional protein PyrR from Corynebacterium efficiens (strain DSM 44549 / YS-314 / AJ 12310 / JCM 11189 / NBRC 100395).